A 697-amino-acid polypeptide reads, in one-letter code: Elongation factor G (697 aa).

The tr-type G domain occupies 8–283; that stretch reads ERMRNIGIAA…AVVDYLPSPL (276 aa). Residues 17 to 24, 81 to 85, and 135 to 138 contribute to the GTP site; these read AHIDAGKT, DTPGH, and NKMD.

This sequence belongs to the TRAFAC class translation factor GTPase superfamily. Classic translation factor GTPase family. EF-G/EF-2 subfamily.

The protein resides in the cytoplasm. Its function is as follows. Catalyzes the GTP-dependent ribosomal translocation step during translation elongation. During this step, the ribosome changes from the pre-translocational (PRE) to the post-translocational (POST) state as the newly formed A-site-bound peptidyl-tRNA and P-site-bound deacylated tRNA move to the P and E sites, respectively. Catalyzes the coordinated movement of the two tRNA molecules, the mRNA and conformational changes in the ribosome. The polypeptide is Elongation factor G (Solibacter usitatus (strain Ellin6076)).